Reading from the N-terminus, the 132-residue chain is D-ribose pyranase (132 aa).

Catalysis depends on histidine 20, which acts as the Proton donor. Residues aspartate 28, histidine 98, and 120–122 contribute to the substrate site; that span reads YAN.

This sequence belongs to the RbsD / FucU family. RbsD subfamily. As to quaternary structure, homodecamer.

It localises to the cytoplasm. It carries out the reaction beta-D-ribopyranose = beta-D-ribofuranose. Its pathway is carbohydrate metabolism; D-ribose degradation; D-ribose 5-phosphate from beta-D-ribopyranose: step 1/2. Catalyzes the interconversion of beta-pyran and beta-furan forms of D-ribose. The polypeptide is D-ribose pyranase (Geobacillus thermodenitrificans (strain NG80-2)).